Reading from the N-terminus, the 264-residue chain is Proliferating cell nuclear antigen (264 aa).

Residues 61–80 mediate DNA binding; it reads RCDRNLAMGINMTSMAKIMK.

The protein belongs to the PCNA family. Homotrimer. Forms a complex with activator 1 heteropentamer in the presence of ATP.

It localises to the nucleus. This protein is an auxiliary protein of DNA polymerase delta and is involved in the control of eukaryotic DNA replication by increasing the polymerase's processibility during elongation of the leading strand. This Styela clava (Sea squirt) protein is Proliferating cell nuclear antigen (PCNA).